Here is a 153-residue protein sequence, read N- to C-terminus: 3-hydroxyacyl-[acyl-carrier-protein] dehydratase FabZ (153 aa).

H57 is an active-site residue.

Belongs to the thioester dehydratase family. FabZ subfamily.

It is found in the cytoplasm. The enzyme catalyses a (3R)-hydroxyacyl-[ACP] = a (2E)-enoyl-[ACP] + H2O. Its function is as follows. Involved in unsaturated fatty acids biosynthesis. Catalyzes the dehydration of short chain beta-hydroxyacyl-ACPs and long chain saturated and unsaturated beta-hydroxyacyl-ACPs. In Xanthomonas campestris pv. campestris (strain 8004), this protein is 3-hydroxyacyl-[acyl-carrier-protein] dehydratase FabZ.